The following is an 830-amino-acid chain: Nucleolar complex-associated protein 3 (830 aa).

5 disordered regions span residues 1–22 (MGKN…DVAE), 67–86 (KYEE…GNGE), 112–169 (KSKL…EETP), 391–436 (GKPN…KIRD), and 802–830 (LQSE…KKQI). Coiled-coil stretches lie at residues 61–81 (VMTV…LQEE) and 111–156 (KKSK…HEKD). Positions 67 to 84 (KYEEERSKRKTLQEEKGN) are enriched in basic and acidic residues. Residues 118–129 (AETDEAEKDVLE) are compositionally biased toward acidic residues. A compositionally biased stretch (basic and acidic residues) spans 130–140 (DEHVLNKSQRR). The Nuclear localization signal 1 signature appears at 138-145 (QRREKAKK). Over residues 141–150 (EKAKKSKREA) the composition is skewed to basic residues. Over residues 159–168 (DEILQEEEET) the composition is skewed to acidic residues. Basic and acidic residues predominate over residues 391 to 400 (GKPNKEDEHN). A coiled-coil region spans residues 400-429 (NKKYKKNNKRKTQEEQNQVQENERKKSKKD). A Nuclear localization signal 2 motif is present at residues 408 to 415 (KRKTQEEQ). A compositionally biased stretch (basic and acidic residues) spans 420–436 (ENERKKSKKDMMSKIRD). The short motif at 806-813 (EKKPLKKQ) is the Nuclear localization signal 3 element. The span at 817-830 (VKKKLKNPKSKKQI) shows a compositional bias: basic residues.

The protein belongs to the CBF/MAK21 family. As to quaternary structure, component of nucleolar complexes. Interacts with RBL and NOC2 in both the nucleolus and nucleoplasm.

It is found in the nucleus. The protein resides in the nucleolus. It localises to the nucleoplasm. May be required for synthesis of 60S ribosomal subunits and the transport of pre-ribosomes from the nucleoplasm to the cytoplasm. Also required for initiation of DNA replication. The chain is Nucleolar complex-associated protein 3 from Arabidopsis thaliana (Mouse-ear cress).